The sequence spans 162 residues: Endoribonuclease YbeY (162 aa).

H117, H121, and H127 together coordinate Zn(2+).

This sequence belongs to the endoribonuclease YbeY family. It depends on Zn(2+) as a cofactor.

The protein localises to the cytoplasm. Its function is as follows. Single strand-specific metallo-endoribonuclease involved in late-stage 70S ribosome quality control and in maturation of the 3' terminus of the 16S rRNA. The polypeptide is Endoribonuclease YbeY (Francisella tularensis subsp. tularensis (strain WY96-3418)).